A 249-amino-acid polypeptide reads, in one-letter code: Ubiquinone biosynthesis O-methyltransferase (249 aa).

S-adenosyl-L-methionine contacts are provided by arginine 41, glycine 72, aspartate 93, and methionine 136.

Belongs to the methyltransferase superfamily. UbiG/COQ3 family.

The enzyme catalyses a 3-demethylubiquinol + S-adenosyl-L-methionine = a ubiquinol + S-adenosyl-L-homocysteine + H(+). The catalysed reaction is a 3-(all-trans-polyprenyl)benzene-1,2-diol + S-adenosyl-L-methionine = a 2-methoxy-6-(all-trans-polyprenyl)phenol + S-adenosyl-L-homocysteine + H(+). The protein operates within cofactor biosynthesis; ubiquinone biosynthesis. O-methyltransferase that catalyzes the 2 O-methylation steps in the ubiquinone biosynthetic pathway. The sequence is that of Ubiquinone biosynthesis O-methyltransferase from Mesorhizobium japonicum (strain LMG 29417 / CECT 9101 / MAFF 303099) (Mesorhizobium loti (strain MAFF 303099)).